The chain runs to 939 residues: Valine--tRNA ligase (939 aa).

Residues 47–57 carry the 'HIGH' region motif; that stretch reads PNVTGILHMGH. Positions 563-567 match the 'KMSKS' region motif; the sequence is KLSKS. Residue Lys-566 participates in ATP binding. Residues 874–939 adopt a coiled-coil conformation; sequence EHLAKERVRL…QSILDKLASL (66 aa).

Belongs to the class-I aminoacyl-tRNA synthetase family. ValS type 1 subfamily. Monomer.

The protein resides in the cytoplasm. The catalysed reaction is tRNA(Val) + L-valine + ATP = L-valyl-tRNA(Val) + AMP + diphosphate. In terms of biological role, catalyzes the attachment of valine to tRNA(Val). As ValRS can inadvertently accommodate and process structurally similar amino acids such as threonine, to avoid such errors, it has a 'posttransfer' editing activity that hydrolyzes mischarged Thr-tRNA(Val) in a tRNA-dependent manner. In Chlamydia trachomatis serovar L2b (strain UCH-1/proctitis), this protein is Valine--tRNA ligase.